The following is a 157-amino-acid chain: Peptide methionine sulfoxide reductase MsrA (157 aa).

The active site involves Cys13.

Belongs to the MsrA Met sulfoxide reductase family.

It catalyses the reaction L-methionyl-[protein] + [thioredoxin]-disulfide + H2O = L-methionyl-(S)-S-oxide-[protein] + [thioredoxin]-dithiol. The enzyme catalyses [thioredoxin]-disulfide + L-methionine + H2O = L-methionine (S)-S-oxide + [thioredoxin]-dithiol. Has an important function as a repair enzyme for proteins that have been inactivated by oxidation. Catalyzes the reversible oxidation-reduction of methionine sulfoxide in proteins to methionine. This chain is Peptide methionine sulfoxide reductase MsrA, found in Methanococcus maripaludis (strain C5 / ATCC BAA-1333).